A 432-amino-acid polypeptide reads, in one-letter code: 5'-deoxyadenosine deaminase (432 aa).

The Zn(2+) site is built by His-63 and His-65. Substrate-binding residues include Glu-92 and His-184. His-211 provides a ligand contact to Zn(2+). Residues Glu-214 and Asp-299 each coordinate substrate. Zn(2+) is bound at residue Asp-299.

Belongs to the metallo-dependent hydrolases superfamily. MTA/SAH deaminase family. Homotetramer. Zn(2+) serves as cofactor.

The enzyme catalyses 5'-deoxyadenosine + H2O + H(+) = 5'-deoxyinosine + NH4(+). It carries out the reaction S-adenosyl-L-homocysteine + H2O + H(+) = S-inosyl-L-homocysteine + NH4(+). It catalyses the reaction S-methyl-5'-thioadenosine + H2O + H(+) = S-methyl-5'-thioinosine + NH4(+). The catalysed reaction is adenosine + H2O + H(+) = inosine + NH4(+). It participates in amino-acid biosynthesis; S-adenosyl-L-methionine biosynthesis. Its function is as follows. Catalyzes the deamination of three SAM-derived enzymatic products, namely 5'-deoxyadenosine, S-adenosyl-L-homocysteine, and 5'-methylthioadenosine, to produce the inosine analogs. Can also deaminate adenosine. The preferred substrate for this enzyme is 5'-deoxyadenosine, but all these substrates are efficiently deaminated. Likely functions in a S-adenosyl-L-methionine (SAM) recycling pathway from S-adenosyl-L-homocysteine (SAH) produced from SAM-dependent methylation reactions. May also be involved in the recycling of 5'-deoxyadenosine, whereupon the 5'-deoxyribose moiety of 5'-deoxyinosine is further metabolized to deoxyhexoses used for the biosynthesis of aromatic amino acids in methanogens. The chain is 5'-deoxyadenosine deaminase from Methanosarcina mazei (strain ATCC BAA-159 / DSM 3647 / Goe1 / Go1 / JCM 11833 / OCM 88) (Methanosarcina frisia).